The chain runs to 557 residues: D-arabinono-1,4-lactone oxidase (557 aa).

One can recognise an FAD-binding PCMH-type domain in the interval 26–209 (FFCKPQAIFQ…THVTLRTIPK (184 aa)). Histidine 63 carries the post-translational modification Pros-8alpha-FAD histidine.

The protein belongs to the oxygen-dependent FAD-linked oxidoreductase family. The cofactor is FAD.

It is found in the mitochondrion membrane. The catalysed reaction is D-arabinono-1,4-lactone + O2 = dehydro-D-arabinono-1,4-lactone + H2O2 + H(+). The protein operates within cofactor biosynthesis; D-erythroascorbate biosynthesis; dehydro-D-arabinono-1,4-lactone from D-arabinose: step 2/2. In Debaryomyces hansenii (strain ATCC 36239 / CBS 767 / BCRC 21394 / JCM 1990 / NBRC 0083 / IGC 2968) (Yeast), this protein is D-arabinono-1,4-lactone oxidase (ALO1).